The sequence spans 328 residues: Malate dehydrogenase (328 aa).

Residue 11-17 coordinates NAD(+); that stretch reads GAAGQIG. Substrate is bound by residues Arg-94 and Arg-100. Residues Asn-107, Gln-114, and 131–133 contribute to the NAD(+) site; that span reads VGN. 2 residues coordinate substrate: Asn-133 and Arg-164. The active-site Proton acceptor is the His-189.

The protein belongs to the LDH/MDH superfamily. MDH type 2 family.

It catalyses the reaction (S)-malate + NAD(+) = oxaloacetate + NADH + H(+). Catalyzes the reversible oxidation of malate to oxaloacetate. The sequence is that of Malate dehydrogenase from Acinetobacter baylyi (strain ATCC 33305 / BD413 / ADP1).